The chain runs to 122 residues: Ribonuclease P protein component (122 aa).

The protein belongs to the RnpA family. In terms of assembly, consists of a catalytic RNA component (M1 or rnpB) and a protein subunit.

It catalyses the reaction Endonucleolytic cleavage of RNA, removing 5'-extranucleotides from tRNA precursor.. Its function is as follows. RNaseP catalyzes the removal of the 5'-leader sequence from pre-tRNA to produce the mature 5'-terminus. It can also cleave other RNA substrates such as 4.5S RNA. The protein component plays an auxiliary but essential role in vivo by binding to the 5'-leader sequence and broadening the substrate specificity of the ribozyme. The polypeptide is Ribonuclease P protein component (Shouchella clausii (strain KSM-K16) (Alkalihalobacillus clausii)).